Reading from the N-terminus, the 418-residue chain is Glutamyl-tRNA reductase (418 aa).

Substrate-binding positions include 49–52, serine 109, 114–116, and glutamine 120; these read TCNR and EPQ. Cysteine 50 serves as the catalytic Nucleophile. 189-194 serves as a coordination point for NADP(+); the sequence is GAGETI.

This sequence belongs to the glutamyl-tRNA reductase family. In terms of assembly, homodimer.

It carries out the reaction (S)-4-amino-5-oxopentanoate + tRNA(Glu) + NADP(+) = L-glutamyl-tRNA(Glu) + NADPH + H(+). It functions in the pathway porphyrin-containing compound metabolism; protoporphyrin-IX biosynthesis; 5-aminolevulinate from L-glutamyl-tRNA(Glu): step 1/2. In terms of biological role, catalyzes the NADPH-dependent reduction of glutamyl-tRNA(Glu) to glutamate 1-semialdehyde (GSA). In Escherichia coli O157:H7, this protein is Glutamyl-tRNA reductase.